A 292-amino-acid polypeptide reads, in one-letter code: 4-hydroxybenzoate octaprenyltransferase (292 aa).

8 helical membrane-spanning segments follow: residues 20-40 (IGILLLLWPTLWGLWLAADGM), 43-63 (PMILVIFILGTILMRSAGCAI), 94-114 (LLIAAGLSLCAFLLILPLNLL), 135-155 (FFAMPQAYLGIAFSFGIPMAF), 160-180 (GTVPPLAWLLVLANLFWVIAY), 209-229 (VAGILLCHIIFLSTLTYAGIL), 234-254 (IWFYGALLVALGLVIVQYGMI), and 266-286 (FLHNNWIGAVIFAGILLDTLF).

This sequence belongs to the UbiA prenyltransferase family. Requires Mg(2+) as cofactor.

It localises to the cell inner membrane. The enzyme catalyses all-trans-octaprenyl diphosphate + 4-hydroxybenzoate = 4-hydroxy-3-(all-trans-octaprenyl)benzoate + diphosphate. Its pathway is cofactor biosynthesis; ubiquinone biosynthesis. Functionally, catalyzes the prenylation of para-hydroxybenzoate (PHB) with an all-trans polyprenyl group. Mediates the second step in the final reaction sequence of ubiquinone-8 (UQ-8) biosynthesis, which is the condensation of the polyisoprenoid side chain with PHB, generating the first membrane-bound Q intermediate 3-octaprenyl-4-hydroxybenzoate. This Nitrosomonas europaea (strain ATCC 19718 / CIP 103999 / KCTC 2705 / NBRC 14298) protein is 4-hydroxybenzoate octaprenyltransferase.